Reading from the N-terminus, the 290-residue chain is 33 kDa chaperonin (290 aa).

Cystine bridges form between cysteine 235–cysteine 237 and cysteine 268–cysteine 271.

Belongs to the HSP33 family. In terms of processing, under oxidizing conditions two disulfide bonds are formed involving the reactive cysteines. Under reducing conditions zinc is bound to the reactive cysteines and the protein is inactive.

It localises to the cytoplasm. In terms of biological role, redox regulated molecular chaperone. Protects both thermally unfolding and oxidatively damaged proteins from irreversible aggregation. Plays an important role in the bacterial defense system toward oxidative stress. The chain is 33 kDa chaperonin from Streptococcus uberis (strain ATCC BAA-854 / 0140J).